Consider the following 228-residue polypeptide: Ribose-5-phosphate isomerase A (228 aa).

Residues Thr32–Thr35, Asp85–Asp88, and Lys98–Gly101 contribute to the substrate site. Glu107 functions as the Proton acceptor in the catalytic mechanism. Lys125 contacts substrate.

Belongs to the ribose 5-phosphate isomerase family. Homodimer.

It carries out the reaction aldehydo-D-ribose 5-phosphate = D-ribulose 5-phosphate. It participates in carbohydrate degradation; pentose phosphate pathway; D-ribose 5-phosphate from D-ribulose 5-phosphate (non-oxidative stage): step 1/1. Catalyzes the reversible conversion of ribose-5-phosphate to ribulose 5-phosphate. This chain is Ribose-5-phosphate isomerase A, found in Cupriavidus necator (strain ATCC 17699 / DSM 428 / KCTC 22496 / NCIMB 10442 / H16 / Stanier 337) (Ralstonia eutropha).